The sequence spans 649 residues: Serine/threonine kinase-like domain-containing protein STKLD1 (649 aa).

The span at 1 to 13 (MLGPESDGRRPTQ) shows a compositional bias: basic and acidic residues. Positions 1-23 (MLGPESDGRRPTQGERGPGYPGE) are disordered. One can recognise a Protein kinase domain in the interval 28 to 379 (YQVLYQLNPG…CNQAITSAVL (352 aa)). Residues 34–42 (LNPGALGVN) and Lys-57 each bind ATP. The segment at 621–640 (FSKPGLPPGGSPQPGCTASG) is disordered.

This sequence belongs to the protein kinase superfamily. Ser/Thr protein kinase family. STKL subfamily.

The polypeptide is Serine/threonine kinase-like domain-containing protein STKLD1 (STKLD1) (Macaca fascicularis (Crab-eating macaque)).